We begin with the raw amino-acid sequence, 360 residues long: Phenylalanine--tRNA ligase alpha subunit (360 aa).

Residue E260 participates in Mg(2+) binding.

The protein belongs to the class-II aminoacyl-tRNA synthetase family. Phe-tRNA synthetase alpha subunit type 1 subfamily. Tetramer of two alpha and two beta subunits. It depends on Mg(2+) as a cofactor.

The protein localises to the cytoplasm. The enzyme catalyses tRNA(Phe) + L-phenylalanine + ATP = L-phenylalanyl-tRNA(Phe) + AMP + diphosphate + H(+). The polypeptide is Phenylalanine--tRNA ligase alpha subunit (Methylobacterium radiotolerans (strain ATCC 27329 / DSM 1819 / JCM 2831 / NBRC 15690 / NCIMB 10815 / 0-1)).